A 159-amino-acid chain; its full sequence is Insulin-like peptide 7 (159 aa).

Residues 1 to 31 form the signal peptide; sequence MTRMIIQNSGSWTLCGAVLLFVLPLIPTPEA. Intrachain disulfides connect cysteine 63/cysteine 136, cysteine 75/cysteine 150, and cysteine 135/cysteine 141. A propeptide spans 90-121 (connecting peptide); the sequence is TGNDEAWIKKTTTEPDGSTWLHVNYANMFLRS.

Belongs to the insulin family. In terms of assembly, heterodimer of a B chain and an A chain linked by two disulfide bonds. Broadly expressed at a low level throughout the embryo, except the yolk. Expressed at a moderate level in the embryonic midgut. Larval expression is restricted to ten cells of the ventral nerve cord - in four pairs of centrally located cells in the most posterior abdominal segments and in one pair of dorsally located cells in the A1 or A2 segments.

The protein localises to the secreted. Possible ligand of InR/insulin-like receptor. This is Insulin-like peptide 7 from Drosophila melanogaster (Fruit fly).